The following is a 260-amino-acid chain: 1-(5-phosphoribosyl)-5-[(5-phosphoribosylamino)methylideneamino] imidazole-4-carboxamide isomerase (260 aa).

Asp8 acts as the Proton acceptor in catalysis. Asp130 (proton donor) is an active-site residue.

It belongs to the HisA/HisF family.

It is found in the cytoplasm. It carries out the reaction 1-(5-phospho-beta-D-ribosyl)-5-[(5-phospho-beta-D-ribosylamino)methylideneamino]imidazole-4-carboxamide = 5-[(5-phospho-1-deoxy-D-ribulos-1-ylimino)methylamino]-1-(5-phospho-beta-D-ribosyl)imidazole-4-carboxamide. The protein operates within amino-acid biosynthesis; L-histidine biosynthesis; L-histidine from 5-phospho-alpha-D-ribose 1-diphosphate: step 4/9. The protein is 1-(5-phosphoribosyl)-5-[(5-phosphoribosylamino)methylideneamino] imidazole-4-carboxamide isomerase of Chlorobium phaeobacteroides (strain BS1).